Reading from the N-terminus, the 640-residue chain is ATP-dependent DNA helicase YoaA (640 aa).

A Helicase ATP-binding domain is found at 16–278 (ELSQNIKGFR…KDMQQLGTTS (263 aa)). An ATP-binding site is contributed by 51-58 (AGTGTGKT). [4Fe-4S] cluster is bound at residue C114. The DEAH box motif lies at 125 to 128 (GVLG). Residues C174, C179, and C185 each contribute to the [4Fe-4S] cluster site. The DEAH box motif lies at 231–234 (DEAH). The region spanning 458–634 (SLGEILLPVI…SRTRDLNKVI (177 aa)) is the Helicase C-terminal domain.

This sequence belongs to the helicase family. DinG subfamily. Requires [4Fe-4S] cluster as cofactor.

It carries out the reaction Couples ATP hydrolysis with the unwinding of duplex DNA at the replication fork by translocating in the 5'-3' direction. This creates two antiparallel DNA single strands (ssDNA). The leading ssDNA polymer is the template for DNA polymerase III holoenzyme which synthesizes a continuous strand.. It catalyses the reaction ATP + H2O = ADP + phosphate + H(+). In terms of biological role, probably a 5'-3' DNA helicase. This is ATP-dependent DNA helicase YoaA from Haemophilus influenzae (strain ATCC 51907 / DSM 11121 / KW20 / Rd).